The chain runs to 104 residues: MAGKAHRLSAEERDQLLPNLRAVGWNEVEGRDAIFKQFHFKDFNRAFGFMTRVALQAEKLDHHPEWFNVYNKVHITLSTHECAGLSERDINLASFIEQVAVSMT.

At alanine 2 the chain carries N-acetylalanine. Substrate-binding positions include 61–63 and 78–81; these read DHH and STHE.

It belongs to the pterin-4-alpha-carbinolamine dehydratase family. As to quaternary structure, homotetramer and homodimer. Heterotetramer with HNF1A; formed by a dimer of dimers. Interacts with HNF1B (via HNF-p1 domain); the interaction increases HNF1B transactivation activity. As to expression, mainly expressed in the liver, in pancreatic cells, and in the kidney, especially in the distal convoluted tubule, in the cortical thick ascending limb of Henle's loop and in the connecting tubule.

It is found in the cytoplasm. The protein resides in the nucleus. The enzyme catalyses (4aS,6R)-4a-hydroxy-L-erythro-5,6,7,8-tetrahydrobiopterin = (6R)-L-erythro-6,7-dihydrobiopterin + H2O. In terms of biological role, involved in tetrahydrobiopterin biosynthesis. Seems to both prevent the formation of 7-pterins and accelerate the formation of quinonoid-BH2. Coactivator for HNF1A-dependent transcription. Regulates the dimerization of homeodomain protein HNF1A and enhances its transcriptional activity. Also acts as a coactivator for HNF1B-dependent transcription. This chain is Pterin-4-alpha-carbinolamine dehydratase (Pcbd1), found in Mus musculus (Mouse).